Here is a 209-residue protein sequence, read N- to C-terminus: MARSKTSLGWLKRHVNDPYVKQAQKDGYRSRASYKLLEIQEKYKLIRPGMNVVDLGAAPGGWSQVTSRLIGGQGRLIASDILEMDSIPDVTFIQGDFTEDAVLAQILEAVGNSQVDLVISDMAPNMSGTPEVDMPKAMFLCELALDLAERILKPGGNFVIKIFQGEGFDTYLKDARKKFDKIQMIKPDSSRGSSREQYMLAWGYRGRSE.

G60, W62, D80, D96, and D121 together coordinate S-adenosyl-L-methionine. Residue K161 is the Proton acceptor of the active site.

This sequence belongs to the class I-like SAM-binding methyltransferase superfamily. RNA methyltransferase RlmE family.

It localises to the cytoplasm. The catalysed reaction is uridine(2552) in 23S rRNA + S-adenosyl-L-methionine = 2'-O-methyluridine(2552) in 23S rRNA + S-adenosyl-L-homocysteine + H(+). In terms of biological role, specifically methylates the uridine in position 2552 of 23S rRNA at the 2'-O position of the ribose in the fully assembled 50S ribosomal subunit. The chain is Ribosomal RNA large subunit methyltransferase E from Pseudomonas fluorescens (strain Pf0-1).